The sequence spans 186 residues: Inosine/xanthosine triphosphatase (186 aa).

Glutamine 75 lines the Mg(2+) pocket.

This sequence belongs to the YjjX NTPase family. Homodimer. The cofactor is Mg(2+). Mn(2+) is required as a cofactor.

It carries out the reaction XTP + H2O = XDP + phosphate + H(+). The enzyme catalyses ITP + H2O = IDP + phosphate + H(+). In terms of biological role, phosphatase that hydrolyzes non-canonical purine nucleotides such as XTP and ITP to their respective diphosphate derivatives. Probably excludes non-canonical purines from DNA/RNA precursor pool, thus preventing their incorporation into DNA/RNA and avoiding chromosomal lesions. The polypeptide is Inosine/xanthosine triphosphatase (Shewanella baltica (strain OS195)).